Consider the following 192-residue polypeptide: MITISDAAQAHFVKLLADQPEGTHIRVFVISPGTAQAECGVSYCPPDAVESDDIELEFNGFSAMVDEKSAPFLEEASIDFVTDQLGSQLTLKAPNAKMRKVASDAPLAERVEYVIQSEINPQLASHGGNIMLVEITQEGVAVLQFGGGCNGCSQVDITLKDGIEKQLLDMFPGELSGVSDVTDHQHGAHSYA.

The [4Fe-4S] cluster site is built by cysteine 149 and cysteine 152.

Belongs to the NfuA family. As to quaternary structure, homodimer. [4Fe-4S] cluster is required as a cofactor.

Functionally, involved in iron-sulfur cluster biogenesis. Binds a 4Fe-4S cluster, can transfer this cluster to apoproteins, and thereby intervenes in the maturation of Fe/S proteins. Could also act as a scaffold/chaperone for damaged Fe/S proteins. The polypeptide is Fe/S biogenesis protein NfuA (Shewanella sp. (strain ANA-3)).